A 101-amino-acid chain; its full sequence is Ubiquitin-related modifier 1 homolog (101 aa).

The residue at position 101 (Gly101) is a 1-thioglycine. Residue Gly101 forms a Glycyl lysine isopeptide (Gly-Lys) (interchain with K-? in acceptor proteins) linkage.

This sequence belongs to the URM1 family. In terms of assembly, interacts with cer. Post-translationally, C-terminal thiocarboxylation occurs in 2 steps, it is first acyl-adenylated (-COAMP) via the hesA/moeB/thiF part of the MOCS3 homolog, then thiocarboxylated (-COSH) via the rhodanese domain of the MOCS3 homolog.

The protein resides in the cytoplasm. The protein operates within tRNA modification; 5-methoxycarbonylmethyl-2-thiouridine-tRNA biosynthesis. Acts as a sulfur carrier required for 2-thiolation of mcm(5)S(2)U at tRNA wobble positions of cytosolic tRNA(Lys), tRNA(Glu) and tRNA(Gln). Serves as sulfur donor in tRNA 2-thiolation reaction by being thiocarboxylated (-COSH) at its C-terminus by MOCS3. The sulfur is then transferred to tRNA to form 2-thiolation of mcm(5)S(2)U. Also acts as a ubiquitin-like protein (UBL) that is covalently conjugated via an isopeptide bond to lysine residues of target proteins such as Prx2/Jafrac1, Ciao1, Eip71CD and GILT1. The thiocarboxylated form serves as substrate for conjugation and oxidative stress specifically induces the formation of UBL-protein conjugates. The protein is Ubiquitin-related modifier 1 homolog of Drosophila sechellia (Fruit fly).